Consider the following 141-residue polypeptide: MSKALIKFIRLSPTKARLIAREVRGMNAELAMASLKFMPNKGAKYIANAISSAVANGGFEANEVIVKSCRVDAAAVLKRFRPRARGSASRIRKPTSHILVEVAKAEVKAEEKKTVAKKTTTTKAPAKKTTSTKKATVKKES.

The disordered stretch occupies residues 110 to 141 (EEKKTVAKKTTTTKAPAKKTTSTKKATVKKES). The span at 117–134 (KKTTTTKAPAKKTTSTKK) shows a compositional bias: low complexity.

The protein belongs to the universal ribosomal protein uL22 family. As to quaternary structure, part of the 50S ribosomal subunit.

Functionally, this protein binds specifically to 23S rRNA; its binding is stimulated by other ribosomal proteins, e.g. L4, L17, and L20. It is important during the early stages of 50S assembly. It makes multiple contacts with different domains of the 23S rRNA in the assembled 50S subunit and ribosome. The globular domain of the protein is located near the polypeptide exit tunnel on the outside of the subunit, while an extended beta-hairpin is found that lines the wall of the exit tunnel in the center of the 70S ribosome. The sequence is that of Large ribosomal subunit protein uL22 from Campylobacter jejuni (strain RM1221).